Reading from the N-terminus, the 623-residue chain is DNA-directed RNA polymerase subunit gamma (623 aa).

Zn(2+) is bound by residues C70, C72, C85, and C88. Mg(2+) contacts are provided by D466, D468, and D470.

It belongs to the RNA polymerase beta' chain family. RpoC1 subfamily. In terms of assembly, in cyanobacteria the RNAP catalytic core is composed of 2 alpha, 1 beta, 1 beta', 1 gamma and 1 omega subunit. When a sigma factor is associated with the core the holoenzyme is formed, which can initiate transcription. Mg(2+) is required as a cofactor. The cofactor is Zn(2+).

The catalysed reaction is RNA(n) + a ribonucleoside 5'-triphosphate = RNA(n+1) + diphosphate. In terms of biological role, DNA-dependent RNA polymerase catalyzes the transcription of DNA into RNA using the four ribonucleoside triphosphates as substrates. This is DNA-directed RNA polymerase subunit gamma from Acaryochloris marina (strain MBIC 11017).